A 261-amino-acid polypeptide reads, in one-letter code: Protein-ADP-ribose hydrolase (261 aa).

The Macro domain occupies 74–261 (ADLKPVTGRG…DEALYNKLMS (188 aa)). ADP-D-ribose contacts are provided by aspartate 93, isoleucine 94, and asparagine 107. Residues cysteine 113, histidine 118, and cysteine 120 each coordinate Zn(2+). Cysteine 120, isoleucine 121, aspartate 122, serine 211, threonine 212, glycine 213, and phenylalanine 215 together coordinate ADP-D-ribose.

It belongs to the MacroD-type family. Zn-Macro subfamily. It depends on Zn(2+) as a cofactor.

The enzyme catalyses 4-O-(ADP-D-ribosyl)-L-aspartyl-[protein] + H2O = L-aspartyl-[protein] + ADP-D-ribose + H(+). In terms of biological role, ADP-ribosylhydrolase that specifically reverses the SirTM-mediated mono-ADP-ribosylation at an asparatate residue of GcvH-L, by releasing ADP-ribose from the target protein. May play a role in the regulation of the response to host-induced oxidative stress. This chain is Protein-ADP-ribose hydrolase, found in Treponema medium.